Consider the following 123-residue polypeptide: Ribosome-binding factor A (123 aa).

It belongs to the RbfA family. In terms of assembly, monomer. Binds 30S ribosomal subunits, but not 50S ribosomal subunits or 70S ribosomes.

It is found in the cytoplasm. Functionally, one of several proteins that assist in the late maturation steps of the functional core of the 30S ribosomal subunit. Associates with free 30S ribosomal subunits (but not with 30S subunits that are part of 70S ribosomes or polysomes). Required for efficient processing of 16S rRNA. May interact with the 5'-terminal helix region of 16S rRNA. This Dechloromonas aromatica (strain RCB) protein is Ribosome-binding factor A.